A 281-amino-acid chain; its full sequence is Microtubule-associated protein RP/EB family member 3 (281 aa).

The 103-residue stretch at 14-116 (NLSRHDMLAW…FIQWFKKFFD (103 aa)) folds into the Calponin-homology (CH) domain. The interval 157-181 (VPQRTSPTGPKNMQTSGRLSNVAPP) is disordered. Positions 158 to 175 (PQRTSPTGPKNMQTSGRL) are enriched in polar residues. Ser162 and Ser176 each carry phosphoserine. Positions 194 to 264 (GGHETDAQIL…LYATEEGFAP (71 aa)) constitute an EB1 C-terminal domain. Positions 217–260 (DGLEKERDFYFSKLRDIELICQEHESENSPVISGIIGILYATEE) are APC-binding. Residues 217 to 281 (DGLEKERDFY…EHQQEDQDEY (65 aa)) are DCTN1-binding. The segment at 261-281 (GFAPPEDDEIEEHQQEDQDEY) is disordered. Over residues 272–281 (EHQQEDQDEY) the composition is skewed to basic and acidic residues.

The protein belongs to the MAPRE family. As to quaternary structure, homodimer. Heterodimer with MAPRE1. Binds monomeric and polymerized GTP-bound tubulin. Interacts with APC2. Interacts with DCTN1 and SRCIN1. Binds to the C-terminal domain of APC. Interacts (via C-terminus) with CLIP1. Interacts with SLAIN2 and SLAIN1. Interacts with AKAP9. Interacts with PDE4DIP. Interacts with PDE4DIP isoform 13/MMG8/SMYLE; this interaction is required for its recruitment to the Golgi apparatus. As to expression, predominantly expressed in brain and muscle.

The protein resides in the cytoplasm. It localises to the cytoskeleton. In terms of biological role, plus-end tracking protein (+TIP) that binds to the plus-end of microtubules and regulates the dynamics of the microtubule cytoskeleton. Promotes microtubule growth. May be involved in spindle function by stabilizing microtubules and anchoring them at centrosomes. Also acts as a regulator of minus-end microtubule organization: interacts with the complex formed by AKAP9 and PDE4DIP, leading to recruit CAMSAP2 to the Golgi apparatus, thereby tethering non-centrosomal minus-end microtubules to the Golgi, an important step for polarized cell movement. Promotes elongation of CAMSAP2-decorated microtubule stretches on the minus-end of microtubules. The polypeptide is Microtubule-associated protein RP/EB family member 3 (MAPRE3) (Homo sapiens (Human)).